We begin with the raw amino-acid sequence, 127 residues long: Prophage antitermination protein Q homolog QuuD (127 aa).

Belongs to the phage antitermination Q type 1 family.

Functionally, positively regulate expression of some phage genes. Bacterial host RNA polymerase modified by antitermination proteins transcribes through termination sites that otherwise prevent expression of the regulated genes. This chain is Prophage antitermination protein Q homolog QuuD (quuD), found in Escherichia coli (strain K12).